The chain runs to 257 residues: Putative hydro-lyase Bcep18194_B2576 (257 aa).

The protein belongs to the D-glutamate cyclase family.

The polypeptide is Putative hydro-lyase Bcep18194_B2576 (Burkholderia lata (strain ATCC 17760 / DSM 23089 / LMG 22485 / NCIMB 9086 / R18194 / 383)).